The following is a 416-amino-acid chain: MDAFNYRGGELFAEGVALSAIAERFGTPTYVYSRAHIEAQYRTFADALEGMPHLVCFAVKANSNLGVLNVLARLGAGFDIVSGGELERVLAAGGSADKIVFSGVGKTREDMRRALEVGVHCFNIESTDELGSRLQIVAAELGVRAPISLRVNPDVDAGTHPYISTGLKENKFGIAIADAEDVYVRAAQLPNLEVLGVDCHIGSQLTTLEPFIDALDRLLALVDRLGDCGIYLRHIDLGGGVGVRYRDEEPPLVADYIKAVRERLDGRDLALMFEPGRYIVANAGVLLTQVEYLKHTEHKDFAIVDAAMNDLIRPALYQAWMDVTAVRPRDTAARSYDIVGPICETGDFLAKGRELALEEGDLLAVHSAGAYGFVMSSNYNTRGRCAEVLVDGDQAFEVRRRETVAELFAGESLLPE.

N6-(pyridoxal phosphate)lysine is present on Lys-60. Pyridoxal 5'-phosphate-binding positions include Gly-240 and 274-277 (EPGR). Substrate-binding residues include Arg-277, Arg-313, and Tyr-317. Residue Cys-343 is the Proton donor of the active site. 2 residues coordinate substrate: Glu-344 and Tyr-371. Tyr-371 is a pyridoxal 5'-phosphate binding site.

Belongs to the Orn/Lys/Arg decarboxylase class-II family. LysA subfamily. Homodimer. The cofactor is pyridoxal 5'-phosphate.

It catalyses the reaction meso-2,6-diaminopimelate + H(+) = L-lysine + CO2. The protein operates within amino-acid biosynthesis; L-lysine biosynthesis via DAP pathway; L-lysine from DL-2,6-diaminopimelate: step 1/1. Its function is as follows. Specifically catalyzes the decarboxylation of meso-diaminopimelate (meso-DAP) to L-lysine. The chain is Diaminopimelate decarboxylase from Pseudomonas fluorescens.